The primary structure comprises 354 residues: Biotin synthase (354 aa).

A Radical SAM core domain is found at Asn41–Ser265. [4Fe-4S] cluster-binding residues include Cys56, Cys60, and Cys63. The [2Fe-2S] cluster site is built by Cys100, Cys131, Cys191, and Arg263.

It belongs to the radical SAM superfamily. Biotin synthase family. Homodimer. [4Fe-4S] cluster serves as cofactor. [2Fe-2S] cluster is required as a cofactor.

The enzyme catalyses (4R,5S)-dethiobiotin + (sulfur carrier)-SH + 2 reduced [2Fe-2S]-[ferredoxin] + 2 S-adenosyl-L-methionine = (sulfur carrier)-H + biotin + 2 5'-deoxyadenosine + 2 L-methionine + 2 oxidized [2Fe-2S]-[ferredoxin]. It functions in the pathway cofactor biosynthesis; biotin biosynthesis; biotin from 7,8-diaminononanoate: step 2/2. Its function is as follows. Catalyzes the conversion of dethiobiotin (DTB) to biotin by the insertion of a sulfur atom into dethiobiotin via a radical-based mechanism. The polypeptide is Biotin synthase (Shewanella sediminis (strain HAW-EB3)).